The following is a 103-amino-acid chain: N(4)-acetylcytidine amidohydrolase (103 aa).

Residues 6–101 (ITFFQRFQDD…QTQFYVIEFK (96 aa)) enclose the ASCH domain. The Proton acceptor role is filled by Lys-21. Catalysis depends on Thr-24, which acts as the Nucleophile. Glu-74 acts as the Proton donor in catalysis.

The protein belongs to the N(4)-acetylcytidine amidohydrolase family.

The catalysed reaction is N(4)-acetylcytidine + H2O = cytidine + acetate + H(+). It carries out the reaction N(4)-acetyl-2'-deoxycytidine + H2O = 2'-deoxycytidine + acetate + H(+). The enzyme catalyses N(4)-acetylcytosine + H2O = cytosine + acetate + H(+). In terms of biological role, catalyzes the hydrolysis of N(4)-acetylcytidine (ac4C). The polypeptide is N(4)-acetylcytidine amidohydrolase (yqfB) (Escherichia coli O81 (strain ED1a)).